Reading from the N-terminus, the 432-residue chain is Testis-specific Y-encoded-like protein 1 (432 aa).

3 disordered regions span residues 1-31, 54-110, and 116-135; these read MSGRDGGERTPLLEAHSLTTSDCAAGAPDPS, ALPP…LETA, and TDDSLGNGCQPGEPQGLSRE. A Glycyl lysine isopeptide (Lys-Gly) (interchain with G-Cter in SUMO2) cross-link involves residue Lys-160.

This sequence belongs to the nucleosome assembly protein (NAP) family. Ubiquitinated by the CRL2(APPBP2) complex, which recognizes the Arg-Xaa-Xaa-Gly sequence at the C-terminus, leading to its degradation.

The protein localises to the nucleus. The protein resides in the nucleolus. This chain is Testis-specific Y-encoded-like protein 1 (TSPYL1), found in Bos taurus (Bovine).